Consider the following 138-residue polypeptide: Small ribosomal subunit protein uS11c (138 aa).

The disordered stretch occupies residues 1-23 (MAKPILRIGSRKNTRSGSRKNVR). Over residues 9–23 (GSRKNTRSGSRKNVR) the composition is skewed to basic residues.

This sequence belongs to the universal ribosomal protein uS11 family. Part of the 30S ribosomal subunit.

Its subcellular location is the plastid. The protein resides in the chloroplast. The polypeptide is Small ribosomal subunit protein uS11c (Crucihimalaya wallichii (Rock-cress)).